The sequence spans 276 residues: Large ribosomal subunit protein uL2 (276 aa).

2 disordered regions span residues proline 36–glycine 55 and threonine 219–lysine 276. The span at leucine 255–lysine 276 shows a compositional bias: basic residues.

This sequence belongs to the universal ribosomal protein uL2 family. In terms of assembly, part of the 50S ribosomal subunit. Forms a bridge to the 30S subunit in the 70S ribosome.

In terms of biological role, one of the primary rRNA binding proteins. Required for association of the 30S and 50S subunits to form the 70S ribosome, for tRNA binding and peptide bond formation. It has been suggested to have peptidyltransferase activity; this is somewhat controversial. Makes several contacts with the 16S rRNA in the 70S ribosome. The chain is Large ribosomal subunit protein uL2 from Macrococcus caseolyticus (strain JCSC5402) (Macrococcoides caseolyticum).